A 344-amino-acid polypeptide reads, in one-letter code: Polycomb group RING finger protein 2 (344 aa).

The RING-type zinc finger occupies 18-57; that stretch reads CALCGGYFIDATTIVECLHSFCKTCIVRYLETNKYCPMCD. Residues K51 and K88 each participate in a glycyl lysine isopeptide (Lys-Gly) (interchain with G-Cter in SUMO2) cross-link. The short motif at 81-95 is the Nuclear localization signal element; sequence KLVPGLFKDEMKRRR. Polar residues predominate over residues 240 to 253; sequence TVPTPSEGTNTSGA. A disordered region spans residues 240–344; that stretch reads TVPTPSEGTN…VNGAPVPPLT (105 aa). Low complexity predominate over residues 263 to 313; sequence APSPATLPATSSSLPSPATPSHGSPSSHGPPATHPTSPTPPSTASGATTAA. A compositionally biased stretch (polar residues) spans 314-328; it reads NGGSLNCLQTPSSTS. T344 bears the Phosphothreonine mark.

In terms of assembly, exists as both a monomer and homodimer. Component of a PRC1-like complex. Interacts with CBX8, RING1 and RNF2. Interacts with CBX7. Interacts with PHC2. Phosphorylated. Homodimer formation is regulated by phosphorylation with only unphosphorylated proteins forming homodimers. Detected in all tissues examined with high expression found in placenta lung and kidney and low expression, in liver, pancreas and skeletal muscle.

The protein resides in the nucleus. Transcriptional repressor. Binds specifically to the DNA sequence 5'-GACTNGACT-3'. Has tumor suppressor activity. May play a role in control of cell proliferation and/or neural cell development. Regulates proliferation of early T progenitor cells by maintaining expression of HES1. Also plays a role in antero-posterior specification of the axial skeleton and negative regulation of the self-renewal activity of hematopoietic stem cells. Component of a Polycomb group (PcG) multiprotein PRC1-like complex, a complex class required to maintain the transcriptionally repressive state of many genes, including Hox genes, throughout development. PcG PRC1 complex acts via chromatin remodeling and modification of histones; it mediates monoubiquitination of histone H2A 'Lys-119', rendering chromatin heritably changed in its expressibility. Within the PRC1-like complex, regulates RNF2 ubiquitin ligase activity. The polypeptide is Polycomb group RING finger protein 2 (PCGF2) (Homo sapiens (Human)).